A 311-amino-acid polypeptide reads, in one-letter code: VQ motif-containing protein 9 (311 aa).

The span at 1 to 27 shows a compositional bias: low complexity; sequence MDKSCNSSGDSSAVSASATSSTGNNTT. The interval 1-78 is disordered; the sequence is MDKSCNSSGD…QINQGNLHQH (78 aa). The VQ signature appears at 90-99; sequence FRDVVQKLTG. 3 disordered regions span residues 103-125, 228-266, and 290-311; these read HERISAPPQQPIHHPKPQQSSRL, QQENAPPSQHNSFPPPHPPPPSSAVSQTVPTSIPAPPLF, and GQLGFPVSPTTVPLPSPKYKGH. A compositionally biased stretch (pro residues) spans 240–249; sequence FPPPHPPPPS. Residues 290–302 are compositionally biased toward low complexity; the sequence is GQLGFPVSPTTVP.

Interacts (via N-terminus) with WRKY8. As to expression, highly expressed in roots and at lower levels in rosette leaves, cauline leaves, stems, flowers and siliques.

Its subcellular location is the nucleus. In terms of biological role, functions as a negative regulator of salt stress response. Functions as a repressor of WRKY8 transcription factor by decreasing the DNA-binding activity of WRKY8 and acts antagonistically with WRKY8 to regulate sodium and potassium homeostasis under salt stress. In Arabidopsis thaliana (Mouse-ear cress), this protein is VQ motif-containing protein 9.